The following is a 447-amino-acid chain: N-succinylarginine dihydrolase (447 aa).

Residues 19-28 (AGLSFGNVAS), asparagine 110, and 137-138 (HR) each bind substrate. Glutamate 174 is a catalytic residue. Residue arginine 214 coordinates substrate. Residue histidine 250 is part of the active site. Aspartate 252 and asparagine 364 together coordinate substrate. Cysteine 370 serves as the catalytic Nucleophile.

This sequence belongs to the succinylarginine dihydrolase family. In terms of assembly, homodimer.

The enzyme catalyses N(2)-succinyl-L-arginine + 2 H2O + 2 H(+) = N(2)-succinyl-L-ornithine + 2 NH4(+) + CO2. The protein operates within amino-acid degradation; L-arginine degradation via AST pathway; L-glutamate and succinate from L-arginine: step 2/5. Functionally, catalyzes the hydrolysis of N(2)-succinylarginine into N(2)-succinylornithine, ammonia and CO(2). The sequence is that of N-succinylarginine dihydrolase from Idiomarina loihiensis (strain ATCC BAA-735 / DSM 15497 / L2-TR).